A 409-amino-acid chain; its full sequence is MSEEVWNGNQGILSVYVSKARDLPNLNKLDKQNVMLRLRIAHMTRASNTLHRAGQNPVFHYLEKFDITPEIKPLMYVEVYCDRRKKSPLPIGRCEIDLLNAIRADPKEGYCTWYELKRSGDEFAGTIFIELTFTPKVPRLNRDDLNKEMDRLDSSMAMRPIPPLPTESEYDYVHGSTMRQITPQCVSTSHEDKDEGQPYRNGNVFSMSSKSDTAVLANSNDPIILPPTFSASMGTTSTLETNDTAISNTSNTKFHFANLRKLKEKINIFKNPDSSTNNCQNESNKVDIEALQKAIGVTSLSYDEDDDDDDENDAFYSSSHRVSHNYNQPPLPPIPTRDDMSNYSSSRNTPLVRRDRPSRLDSSSPNSHPHPSGLNSPKLPPLPTTSNSNFNSRKNSMSPTRKRPPPRLS.

Positions 1–114 (MSEEVWNGNQ…DPKEGYCTWY (114 aa)) constitute a C2 domain. Residues 300–409 (LSYDEDDDDD…TRKRPPPRLS (110 aa)) form a disordered region. The span at 302 to 313 (YDEDDDDDDEND) shows a compositional bias: acidic residues. Residues 315–328 (FYSSSHRVSHNYNQ) show a composition bias toward polar residues. Over residues 360-377 (LDSSSPNSHPHPSGLNSP) the composition is skewed to low complexity. Residues 384 to 399 (TTSNSNFNSRKNSMSP) show a composition bias toward polar residues. A Phosphoserine modification is found at Ser-392. Residues 400-409 (TRKRPPPRLS) are compositionally biased toward basic residues.

This sequence belongs to the INN1/fic1 family. Interacts with CYK2, CYK3 and IQG1.

Its subcellular location is the bud neck. Functionally, required for the ingression of the plasma membrane into the bud neck at the end of cytokinesis, leading to the separation of the mother and daughter cells. Stimulates the synthesis of the primary septum (PS) by CHS2. The sequence is that of Ingression protein 1 (INN1) from Saccharomyces cerevisiae (strain ATCC 204508 / S288c) (Baker's yeast).